The following is a 338-amino-acid chain: Ketol-acid reductoisomerase (NADP(+)) (338 aa).

Residues 1–181 form the KARI N-terminal Rossmann domain; sequence MKIYYDKDCN…GGGKAGIIET (181 aa). Residues 24–27, lysine 47, serine 50, serine 52, and 82–85 contribute to the NADP(+) site; these read YGSQ and DEIQ. Histidine 107 is a catalytic residue. Glycine 133 provides a ligand contact to NADP(+). Residues 182–327 form the KARI C-terminal knotted domain; sequence SFKEETETDL…ARLRSMMAWI (146 aa). 4 residues coordinate Mg(2+): aspartate 190, glutamate 194, glutamate 226, and glutamate 230. Residue serine 251 participates in substrate binding.

This sequence belongs to the ketol-acid reductoisomerase family. The cofactor is Mg(2+).

The catalysed reaction is (2R)-2,3-dihydroxy-3-methylbutanoate + NADP(+) = (2S)-2-acetolactate + NADPH + H(+). It carries out the reaction (2R,3R)-2,3-dihydroxy-3-methylpentanoate + NADP(+) = (S)-2-ethyl-2-hydroxy-3-oxobutanoate + NADPH + H(+). It functions in the pathway amino-acid biosynthesis; L-isoleucine biosynthesis; L-isoleucine from 2-oxobutanoate: step 2/4. It participates in amino-acid biosynthesis; L-valine biosynthesis; L-valine from pyruvate: step 2/4. In terms of biological role, involved in the biosynthesis of branched-chain amino acids (BCAA). Catalyzes an alkyl-migration followed by a ketol-acid reduction of (S)-2-acetolactate (S2AL) to yield (R)-2,3-dihydroxy-isovalerate. In the isomerase reaction, S2AL is rearranged via a Mg-dependent methyl migration to produce 3-hydroxy-3-methyl-2-ketobutyrate (HMKB). In the reductase reaction, this 2-ketoacid undergoes a metal-dependent reduction by NADPH to yield (R)-2,3-dihydroxy-isovalerate. This Geotalea uraniireducens (strain Rf4) (Geobacter uraniireducens) protein is Ketol-acid reductoisomerase (NADP(+)).